We begin with the raw amino-acid sequence, 158 residues long: Developmental pluripotency-associated protein 3 (158 aa).

2 disordered regions span residues 1–38 (MDEP…EILQ) and 54–78 (SAKP…VENR). Residues 26–35 (DEGDSPDDSE) are compositionally biased toward acidic residues. Positions 58–68 (TKYHRRQRVRL) are enriched in basic residues.

It is found in the nucleus. Its subcellular location is the cytoplasm. In terms of biological role, primordial germ cell (PGCs)-specific protein involved in epigenetic chromatin reprogramming in the zygote following fertilization. In zygotes, DNA demethylation occurs selectively in the paternal pronucleus before the first cell division, while the adjacent maternal pronucleus and certain paternally-imprinted loci are protected from this process. Participates in protection of DNA methylation in the maternal pronucleus by preventing conversion of 5mC to 5hmC: specifically recognizes and binds histone H3 dimethylated at 'Lys-9' (H3K9me2) on maternal genome, and protects maternal genome from TET3-mediated conversion to 5hmC and subsequent DNA demethylation. Does not bind paternal chromatin, which is mainly packed into protamine and does not contain much H3K9me2 mark. Also protects imprinted loci that are marked with H3K9me2 in mature sperm from DNA demethylation in early embryogenesis. May be important for the totipotent/pluripotent states continuing through preimplantation development. Also involved in chromatin condensation in oocytogenesis. This Rattus norvegicus (Rat) protein is Developmental pluripotency-associated protein 3 (Dppa3).